Reading from the N-terminus, the 467-residue chain is Glutamate--tRNA ligase (467 aa).

Residues 9-19 carry the 'HIGH' region motif; sequence PSPTGNLHIGS. Residues 237 to 241 carry the 'KMSKS' region motif; it reads KISKR. Residue lysine 240 participates in ATP binding.

It belongs to the class-I aminoacyl-tRNA synthetase family. Glutamate--tRNA ligase type 1 subfamily. As to quaternary structure, monomer.

Its subcellular location is the cytoplasm. It catalyses the reaction tRNA(Glu) + L-glutamate + ATP = L-glutamyl-tRNA(Glu) + AMP + diphosphate. Functionally, catalyzes the attachment of glutamate to tRNA(Glu) in a two-step reaction: glutamate is first activated by ATP to form Glu-AMP and then transferred to the acceptor end of tRNA(Glu). The sequence is that of Glutamate--tRNA ligase from Buchnera aphidicola subsp. Acyrthosiphon pisum (strain APS) (Acyrthosiphon pisum symbiotic bacterium).